Reading from the N-terminus, the 229-residue chain is Peroxiredoxin-like 2A (229 aa).

A thioredoxin fold region spans residues 14 to 112 (MWSIGAGALG…DQLGVPLYAV (99 aa)). Residues cysteine 85 and cysteine 88 each act as redox-active in the active site.

It belongs to the peroxiredoxin-like PRXL2 family. PRXL2A subfamily. As to expression, expressed in CSF1 and TNFSF11-stimulated CD14(+) peripheral blood mononuclear cells (PBMCs).

It localises to the cytoplasm. Its subcellular location is the secreted. In terms of biological role, involved in redox regulation of the cell. Acts as an antioxidant. Inhibits TNFSF11-induced NFKB1 and JUN activation and osteoclast differentiation. May affect bone resorption and help to maintain bone mass. Acts as a negative regulator of macrophage-mediated inflammation by inhibiting macrophage production of inflammatory cytokines, probably through suppression of the MAPK signaling pathway. The polypeptide is Peroxiredoxin-like 2A (Homo sapiens (Human)).